The sequence spans 134 residues: MLWQAYVDDHLMCDIEGHEGHRLTAAAIVGHDGSVWAQSATFPQFKPEEMNGVMTDFNEPGHLAPTGLHLGGTKYMVIQGEAGAVIRGKKGSGGITIKKTGQALVFGIYEEPVTPGQCNMVVERLGDYLLEQGL.

A disulfide bridge connects residues C13 and C118. The short motif at 84 to 100 (AVIRGKKGSGGITIKKT) is the Involved in PIP2 interaction element. T114 carries the phosphothreonine modification.

Belongs to the profilin family. Occurs in many kinds of cells as a complex with monomeric actin in a 1:1 ratio. Post-translationally, phosphorylated by MAP kinases.

The protein localises to the cytoplasm. The protein resides in the cytoskeleton. Its function is as follows. Binds to actin and affects the structure of the cytoskeleton. At high concentrations, profilin prevents the polymerization of actin, whereas it enhances it at low concentrations. This is Profilin-2 from Olea europaea (Common olive).